Consider the following 386-residue polypeptide: ATP synthase subunit a (386 aa).

The next 4 helical transmembrane spans lie at 150 to 170 (FTNE…LFFV), 243 to 263 (HFLI…IVGF), 270 to 290 (FFSF…LVLL), and 310 to 330 (MMAG…MLFL).

This sequence belongs to the ATPase A chain family. In terms of assembly, F-type ATPases have 2 components, CF(1) - the catalytic core - and CF(0) - the membrane proton channel. CF(1) has five subunits: alpha(3), beta(3), gamma(1), delta(1), epsilon(1). CF(0) has three main subunits: a, b and c.

The protein localises to the mitochondrion inner membrane. In terms of biological role, mitochondrial membrane ATP synthase (F(1)F(0) ATP synthase or Complex V) produces ATP from ADP in the presence of a proton gradient across the membrane which is generated by electron transport complexes of the respiratory chain. F-type ATPases consist of two structural domains, F(1) - containing the extramembraneous catalytic core and F(0) - containing the membrane proton channel, linked together by a central stalk and a peripheral stalk. During catalysis, ATP synthesis in the catalytic domain of F(1) is coupled via a rotary mechanism of the central stalk subunits to proton translocation. Key component of the proton channel; it may play a direct role in the translocation of protons across the membrane. In Triticum aestivum (Wheat), this protein is ATP synthase subunit a (ATP6).